The following is a 421-amino-acid chain: Glutamate-1-semialdehyde 2,1-aminomutase (421 aa).

An N6-(pyridoxal phosphate)lysine modification is found at Lys-261.

Belongs to the class-III pyridoxal-phosphate-dependent aminotransferase family. HemL subfamily. Pyridoxal 5'-phosphate is required as a cofactor.

The protein resides in the cytoplasm. It carries out the reaction (S)-4-amino-5-oxopentanoate = 5-aminolevulinate. It participates in porphyrin-containing compound metabolism; protoporphyrin-IX biosynthesis; 5-aminolevulinate from L-glutamyl-tRNA(Glu): step 2/2. In Thermoplasma acidophilum (strain ATCC 25905 / DSM 1728 / JCM 9062 / NBRC 15155 / AMRC-C165), this protein is Glutamate-1-semialdehyde 2,1-aminomutase (hemL).